A 509-amino-acid chain; its full sequence is Protein OS-9 homolog (509 aa).

Positions Met1–Ala23 are cleaved as a signal peptide. Residues Ser64 to Thr74 are compositionally biased toward polar residues. Residues Ser64–Glu91 are disordered. The segment covering Pro75–Glu91 has biased composition (basic and acidic residues). Asn120 carries N-linked (GlcNAc...) asparagine glycosylation. In terms of domain architecture, MRH spans Gly151 to Asp291. An intrachain disulfide couples Cys153 to Cys166. Positions 160, 161, 173, 246, 252, 273, and 279 each coordinate a mannooligosaccharide derivative. Disulfide bonds link Cys245-Cys277 and Cys260-Cys289. Positions Gly433–Leu509 are disordered. Over residues Asp436–Glu451 the composition is skewed to acidic residues. Positions Thr452–Thr461 are enriched in basic and acidic residues. The segment covering Arg489–Glu502 has biased composition (acidic residues). Positions Lys506 to Leu509 match the Prevents secretion from ER motif.

This sequence belongs to the OS-9 family. As to quaternary structure, interacts with missfolded ER lumenal proteins.

The protein resides in the endoplasmic reticulum membrane. Its function is as follows. Lectin involved in the quality control of the secretory pathway. As a member of the endoplasmic reticulum-associated degradation lumenal (ERAD-L) surveillance system, targets misfolded endoplasmic reticulum lumenal glycoproteins for degradation. This is Protein OS-9 homolog (yos9) from Emericella nidulans (strain FGSC A4 / ATCC 38163 / CBS 112.46 / NRRL 194 / M139) (Aspergillus nidulans).